A 614-amino-acid chain; its full sequence is RNA polymerase sigma factor RpoD (614 aa).

The disordered stretch occupies residues 178–222 (THIGSDLSQSERDKDDSKDDSKDDDEDEEEEGPKGPDPEESKERF). A compositionally biased stretch (basic and acidic residues) spans 186 to 198 (QSERDKDDSKDDS). Over residues 199–208 (KDDDEDEEEE) the composition is skewed to acidic residues. Over residues 209–222 (GPKGPDPEESKERF) the composition is skewed to basic and acidic residues. Residues 380–450 (MVEANLRLVI…TRSIADQART (71 aa)) form a sigma-70 factor domain-2 region. Residues 404–407 (DLIQ) carry the Interaction with polymerase core subunit RpoC motif. The sigma-70 factor domain-3 stretch occupies residues 459 to 535 (ETINKLNRIS…DTTLELPLDS (77 aa)). The tract at residues 548–601 (VLAGLTAREAKVLRMRFGIDMNTDHTLEEVGKQFDVTRERIRQIEAKALRKLRH) is sigma-70 factor domain-4. Residues 574–593 (LEEVGKQFDVTRERIRQIEA) constitute a DNA-binding region (H-T-H motif).

This sequence belongs to the sigma-70 factor family. RpoD/SigA subfamily. In terms of assembly, interacts transiently with the RNA polymerase catalytic core.

It localises to the cytoplasm. Functionally, sigma factors are initiation factors that promote the attachment of RNA polymerase to specific initiation sites and are then released. This sigma factor is the primary sigma factor during exponential growth. The sequence is that of RNA polymerase sigma factor RpoD from Shewanella violacea (strain JCM 10179 / CIP 106290 / LMG 19151 / DSS12).